We begin with the raw amino-acid sequence, 152 residues long: UPF0266 membrane protein YobD (152 aa).

3 helical membrane-spanning segments follow: residues 6–26 (LVLI…QFIM), 45–65 (IDSV…VTNH), and 67–87 (ALIT…IFWI).

It belongs to the UPF0266 family.

The protein resides in the cell inner membrane. The sequence is that of UPF0266 membrane protein YobD from Shigella dysenteriae serotype 1 (strain Sd197).